A 92-amino-acid polypeptide reads, in one-letter code: Small ribosomal subunit protein uS19c (92 aa).

Belongs to the universal ribosomal protein uS19 family. In terms of assembly, component of the chloroplast small ribosomal subunit (SSU). Mature 70S chloroplast ribosomes of higher plants consist of a small (30S) and a large (50S) subunit. The 30S small subunit contains 1 molecule of ribosomal RNA (16S rRNA) and 24 different proteins. The 50S large subunit contains 3 rRNA molecules (23S, 5S and 4.5S rRNA) and 33 different proteins. uS19c binds directly to 16S ribosomal RNA.

Its subcellular location is the plastid. The protein localises to the chloroplast. Functionally, component of the chloroplast ribosome (chloro-ribosome), a dedicated translation machinery responsible for the synthesis of chloroplast genome-encoded proteins, including proteins of the transcription and translation machinery and components of the photosynthetic apparatus. In Spinacia oleracea (Spinach), this protein is Small ribosomal subunit protein uS19c (rps19).